Consider the following 476-residue polypeptide: ATP synthase subunit beta (476 aa).

An ATP-binding site is contributed by 162–169 (GGAGVGKT).

The protein belongs to the ATPase alpha/beta chains family. In terms of assembly, F-type ATPases have 2 components, CF(1) - the catalytic core - and CF(0) - the membrane proton channel. CF(1) has five subunits: alpha(3), beta(3), gamma(1), delta(1), epsilon(1). CF(0) has three main subunits: a(1), b(2) and c(9-12). The alpha and beta chains form an alternating ring which encloses part of the gamma chain. CF(1) is attached to CF(0) by a central stalk formed by the gamma and epsilon chains, while a peripheral stalk is formed by the delta and b chains.

Its subcellular location is the cell membrane. It carries out the reaction ATP + H2O + 4 H(+)(in) = ADP + phosphate + 5 H(+)(out). Its function is as follows. Produces ATP from ADP in the presence of a proton gradient across the membrane. The catalytic sites are hosted primarily by the beta subunits. This chain is ATP synthase subunit beta, found in Mycoplasma capricolum subsp. capricolum (strain California kid / ATCC 27343 / NCTC 10154).